Reading from the N-terminus, the 354-residue chain is Guanine nucleotide-binding protein alpha-3 subunit (354 aa).

Gly-2 is lipidated: N-myristoyl glycine. Residue Cys-4 is the site of S-palmitoyl cysteine attachment. A G-alpha domain is found at 33–354 (KECKILLLGS…TNALKDSGIL (322 aa)). A G1 motif region spans residues 36-49 (KILLLGSGESGKST). GTP-binding positions include 41 to 48 (GSGESGKS), 177 to 183 (LRARSKT), 202 to 206 (DVGGQ), 271 to 274 (NKID), and Ala-326. Mg(2+) contacts are provided by Ser-48 and Thr-183. The interval 175–183 (DVLRARSKT) is G2 motif. Residues 198-207 (IHLFDVGGQR) form a G3 motif region. The interval 267-274 (ILFLNKID) is G4 motif. Positions 324–329 (TQATDT) are G5 motif.

Belongs to the G-alpha family. In terms of assembly, g proteins are composed of 3 units; alpha, beta and gamma. The alpha chain contains the guanine nucleotide binding site.

Functionally, guanine nucleotide-binding proteins (G proteins) are involved as modulators or transducers in various transmembrane signaling systems. This subunit is involved in cAMP regulation and morphogenesis. It is essential for dimorphic switching in haploid cells. The chain is Guanine nucleotide-binding protein alpha-3 subunit (FIL1) from Ustilago hordei (Barley covered smut fungus).